Reading from the N-terminus, the 297-residue chain is ER membrane protein complex subunit 2-B (297 aa).

3 TPR repeats span residues 87 to 120, 155 to 188, and 192 to 225; these read HRVKRLTGLRFEAMERYDDALQIYDRILQDDPTN, QEAWHELAELYINELDYAKAAFCLEELILTNPHN, and YQQFAEVKYTQGGLENLELSRKYFSQALKLNNHS.

The protein belongs to the EMC2 family. As to quaternary structure, component of the ER membrane protein complex (EMC).

It localises to the endoplasmic reticulum membrane. Its function is as follows. Part of the endoplasmic reticulum membrane protein complex (EMC) that enables the energy-independent insertion into endoplasmic reticulum membranes of newly synthesized membrane proteins. Preferentially accommodates proteins with transmembrane domains that are weakly hydrophobic or contain destabilizing features such as charged and aromatic residues. Involved in the cotranslational insertion of multi-pass membrane proteins in which stop-transfer membrane-anchor sequences become ER membrane spanning helices. It is also required for the post-translational insertion of tail-anchored/TA proteins in endoplasmic reticulum membranes. By mediating the proper cotranslational insertion of N-terminal transmembrane domains in an N-exo topology, with translocated N-terminus in the lumen of the ER, controls the topology of multi-pass membrane proteins. By regulating the insertion of various proteins in membranes, it is indirectly involved in many cellular processes. This chain is ER membrane protein complex subunit 2-B (emc2-b), found in Xenopus laevis (African clawed frog).